Consider the following 309-residue polypeptide: Minor serine/threonine-protein phosphatase PP2A-1 catalytic subunit (309 aa).

Mn(2+)-binding residues include Asp57, His59, Asp85, and Asn117. Residue His118 is the Proton donor of the active site. His167 and His241 together coordinate Mn(2+). The residue at position 309 (Leu309) is a Leucine methyl ester.

It belongs to the PPP phosphatase family. PP-2A subfamily. Mn(2+) is required as a cofactor.

It catalyses the reaction O-phospho-L-seryl-[protein] + H2O = L-seryl-[protein] + phosphate. The enzyme catalyses O-phospho-L-threonyl-[protein] + H2O = L-threonyl-[protein] + phosphate. Its function is as follows. Essential role in cell cycle control. PP2A may be involved in controlling the entry into mitosis, possibly acting as an inhibitor. The sequence is that of Minor serine/threonine-protein phosphatase PP2A-1 catalytic subunit (ppa1) from Schizosaccharomyces pombe (strain 972 / ATCC 24843) (Fission yeast).